The primary structure comprises 338 residues: Aspartate carbamoyltransferase catalytic subunit (338 aa).

Carbamoyl phosphate-binding residues include R59 and T60. K87 serves as a coordination point for L-aspartate. The carbamoyl phosphate site is built by R109, H142, and Q145. Residues R182 and R253 each coordinate L-aspartate. Positions 294 and 295 each coordinate carbamoyl phosphate.

This sequence belongs to the aspartate/ornithine carbamoyltransferase superfamily. ATCase family. In terms of assembly, heterododecamer (2C3:3R2) of six catalytic PyrB chains organized as two trimers (C3), and six regulatory PyrI chains organized as three dimers (R2).

It catalyses the reaction carbamoyl phosphate + L-aspartate = N-carbamoyl-L-aspartate + phosphate + H(+). The protein operates within pyrimidine metabolism; UMP biosynthesis via de novo pathway; (S)-dihydroorotate from bicarbonate: step 2/3. In terms of biological role, catalyzes the condensation of carbamoyl phosphate and aspartate to form carbamoyl aspartate and inorganic phosphate, the committed step in the de novo pyrimidine nucleotide biosynthesis pathway. The chain is Aspartate carbamoyltransferase catalytic subunit from Prochlorococcus marinus (strain MIT 9515).